We begin with the raw amino-acid sequence, 191 residues long: Putative resolvase L103 (191 aa).

Positions 11 to 30 (LEVLKVHYQTLYRMEEKGLI) form a DNA-binding region, H-T-H motif. The Resolvase/invertase-type recombinase catalytic domain maps to 59–191 (KGICYCRVSS…KKSGKLKAKK (133 aa)). Residues 65–91 (RVSSKKQIKDLNRQVEYMEKNYPEYEI) adopt a coiled-coil conformation. S67 serves as the catalytic O-(5'-phospho-DNA)-serine intermediate.

The protein belongs to the site-specific recombinase resolvase family.

Its function is as follows. Resolvase catalyzes the resolution (a site-specific recombination) of the cointegrated replicon to yield the final transposition products. This is Putative resolvase L103 from Acanthamoeba polyphaga (Amoeba).